Here is a 242-residue protein sequence, read N- to C-terminus: 3-dehydroquinate dehydratase (242 aa).

3-dehydroquinate is bound by residues 39 to 41 (EIR) and R73. H135 functions as the Proton donor/acceptor in the catalytic mechanism. The active-site Schiff-base intermediate with substrate is K162. 3-dehydroquinate contacts are provided by R203 and Q228.

This sequence belongs to the type-I 3-dehydroquinase family. In terms of assembly, homodimer.

The enzyme catalyses 3-dehydroquinate = 3-dehydroshikimate + H2O. It functions in the pathway metabolic intermediate biosynthesis; chorismate biosynthesis; chorismate from D-erythrose 4-phosphate and phosphoenolpyruvate: step 3/7. In terms of biological role, involved in the third step of the chorismate pathway, which leads to the biosynthesis of aromatic amino acids. Catalyzes the cis-dehydration of 3-dehydroquinate (DHQ) and introduces the first double bond of the aromatic ring to yield 3-dehydroshikimate. In Methanosarcina barkeri (strain Fusaro / DSM 804), this protein is 3-dehydroquinate dehydratase.